We begin with the raw amino-acid sequence, 408 residues long: Phosphatidylinositol transfer protein CSR1 (408 aa).

At S2 the chain carries N-acetylserine. Phosphoserine is present on S2. The CRAL-TRIO domain maps to 157-317; sequence ETGVIKNLEL…YLGGENDNDL (161 aa).

The protein belongs to the PITP family. In terms of assembly, forms a complex with 2 TSA2 subunits. Binds phosphatidylinositol (PtdIns).

It localises to the cytoplasm. Its subcellular location is the microsome. The protein localises to the endosome. The enzyme catalyses a 1,2-diacyl-sn-glycero-3-phospho-(1D-myo-inositol)(in) = a 1,2-diacyl-sn-glycero-3-phospho-(1D-myo-inositol)(out). In terms of biological role, non-classical phosphatidylinositol (PtdIns) transfer protein (PITP), which exhibits PtdIns-binding/transfer activity in the absence of detectable PtdCho-binding/transfer activity. Activates SPO14/PLD1 (phospholipase D1) by stimulating phosphoinositide synthesis via the STT4 PtdIns 4-kinase. Modulates ArfGAP function through effects on SPO14 activity. Inhibits phosphatidylcholine degradation by PLB1 (phospholipase B1). May also regulate post-Golgi membrane-trafficking events and have a role resistance to oxidative stress. Inhibits fatty acid synthase activity in response to heme depletion and oleic acid starvation, preventing saturated fatty acid (SFA) accumulation. This is Phosphatidylinositol transfer protein CSR1 (CSR1) from Saccharomyces cerevisiae (strain ATCC 204508 / S288c) (Baker's yeast).